Reading from the N-terminus, the 37-residue chain is Large ribosomal subunit protein bL36 (37 aa).

This sequence belongs to the bacterial ribosomal protein bL36 family.

The polypeptide is Large ribosomal subunit protein bL36 (Staphylococcus saprophyticus subsp. saprophyticus (strain ATCC 15305 / DSM 20229 / NCIMB 8711 / NCTC 7292 / S-41)).